A 202-amino-acid polypeptide reads, in one-letter code: Protein Thf1 (202 aa).

Positions 174 to 202 form a coiled coil; it reads IYKSSILKMEQAKELLQEAKIKDKKEKKK.

Belongs to the THF1 family.

In terms of biological role, may be involved in photosynthetic membrane biogenesis. In Prochlorococcus marinus subsp. pastoris (strain CCMP1986 / NIES-2087 / MED4), this protein is Protein Thf1.